Reading from the N-terminus, the 955-residue chain is Auxin response factor 11 (955 aa).

Positions 143–245 (FCKNLTASDT…QLLLGVRRAT (103 aa)) form a DNA-binding region, TF-B3. Residues 518 to 543 (ESKLNATSRDPRNTDSYTSRSTSEQN) are compositionally biased toward polar residues. Disordered regions lie at residues 518–573 (ESKL…LSSA) and 609–646 (TQGNFVGQPHGHQVEQKGVLSPPKVESSKSPDGGKSVN). Over residues 551-560 (KTRRSKKGLP) the composition is skewed to basic residues. The PB1 domain maps to 852 to 936 (RTYTKVQKQG…RCIRILSPSE (85 aa)).

Belongs to the ARF family. As to quaternary structure, homodimers and heterodimers.

It localises to the nucleus. In terms of biological role, auxin response factors (ARFs) are transcriptional factors that bind specifically to the DNA sequence 5'-TGTCTC-3' found in the auxin-responsive promoter elements (AuxREs). In Oryza sativa subsp. indica (Rice), this protein is Auxin response factor 11 (ARF11).